The following is a 411-amino-acid chain: Zinc metalloproteinase/disintegrin (411 aa).

The signal sequence occupies residues 1 to 20 (MIEVLLVTICLAVFPYQGSS). The propeptide occupies 21-190 (IILESGNVND…KASQLYLTPE (170 aa)). In terms of domain architecture, Peptidase M12B spans 197-395 (RYVKLAIVVD…SKPQCILNAP (199 aa)). Residue D284 participates in Ca(2+) binding. Intrachain disulfides connect C308–C390, C352–C374, and C354–C357. H333 is a binding site for Zn(2+). The active site involves E334. Zn(2+) contacts are provided by H337 and H343. Residues C390 and N393 each contribute to the Ca(2+) site. Residues 396-411 (LRTDTVSTPVSGNEPL) constitute a propeptide that is removed on maturation.

The protein belongs to the venom metalloproteinase (M12B) family. P-II subfamily. Monomer. The cofactor is Zn(2+). In terms of tissue distribution, expressed by the venom gland.

It is found in the secreted. Its function is as follows. Snake venom metalloproteinase that impairs hemostasis in the envenomed animal. In Protobothrops mucrosquamatus (Taiwan habu), this protein is Zinc metalloproteinase/disintegrin.